Consider the following 266-residue polypeptide: Proteasome subunit beta type-7 (266 aa).

Residues 1–33 (MNHDPFSWGRPADSTYGAYNTQIANAGASPMVN) constitute a propeptide that is removed on maturation.

The protein belongs to the peptidase T1B family. The 26S proteasome consists of a 20S proteasome core and two 19S regulatory subunits. The 20S proteasome core is composed of 28 subunits that are arranged in four stacked rings, resulting in a barrel-shaped structure. The two end rings are each formed by seven alpha subunits, and the two central rings are each formed by seven beta subunits. The catalytic chamber with the active sites is on the inside of the barrel. Interacts with CIC1.

It is found in the cytoplasm. The protein localises to the nucleus. Its function is as follows. Non-catalytic component of the proteasome which degrades poly-ubiquitinated proteins in the cytoplasm and in the nucleus. It is essential for the regulated turnover of proteins and for the removal of misfolded proteins. The proteasome is a multicatalytic proteinase complex that is characterized by its ability to cleave peptides with Arg, Phe, Tyr, Leu, and Glu adjacent to the leaving group at neutral or slightly basic pH. It has an ATP-dependent proteolytic activity. PRE3 and PRE4 are necessary for the peptidyl-glutamyl-peptide-hydrolyzing activity. This chain is Proteasome subunit beta type-7 (PRE4), found in Saccharomyces cerevisiae (strain ATCC 204508 / S288c) (Baker's yeast).